Consider the following 182-residue polypeptide: UPF0301 protein NGK_1355 (182 aa).

This sequence belongs to the UPF0301 (AlgH) family.

The chain is UPF0301 protein NGK_1355 from Neisseria gonorrhoeae (strain NCCP11945).